The chain runs to 278 residues: Energy-coupling factor transporter ATP-binding protein EcfA (278 aa).

The ABC transporter domain occupies 4–239; that stretch reads LETRDLKYSY…SETVRSANLR (236 aa). ATP is bound at residue 37 to 44; it reads GPNGAGKS.

This sequence belongs to the ABC transporter superfamily. Energy-coupling factor EcfA family. Forms a stable energy-coupling factor (ECF) transporter complex composed of 2 membrane-embedded substrate-binding proteins (S component), 2 ATP-binding proteins (A component) and 2 transmembrane proteins (T component).

It localises to the cell membrane. ATP-binding (A) component of a common energy-coupling factor (ECF) ABC-transporter complex. Unlike classic ABC transporters this ECF transporter provides the energy necessary to transport a number of different substrates. In Methanococcus maripaludis (strain DSM 14266 / JCM 13030 / NBRC 101832 / S2 / LL), this protein is Energy-coupling factor transporter ATP-binding protein EcfA.